The primary structure comprises 18562 residues: Titin homolog (18562 aa).

One can recognise an Ig-like 1 domain in the interval 90-176; the sequence is PKFIQVIKAY…GVSTSYGYIT (87 aa). A disordered region spans residues 384 to 404; it reads RFHPQPPKPPRAGTSRRFLPE. Ig-like domains are found at residues 406 to 493, 821 to 913, 943 to 1038, and 1135 to 1225; these read PKFV…TQVT, PKIV…AFIN, PKFI…LTIS, and PRFE…LTVD. Cys842 and Cys897 are oxidised to a cystine. Residues 1336-1360 are disordered; the sequence is LPPVQKSMSVQEEKASSQRTPSPMN. Positions 1679–1762 constitute an Ig-like 6 domain; that stretch reads PKFLRKLVNC…ASNVAGTTFS (84 aa). A disulfide bridge connects residues Cys1700 and Cys1751. Coiled-coil stretches lie at residues 1766–1786, 2011–2038, and 2065–2085; these read LKLS…SEIK, QSLD…ERTS, and ISDQ…ALQE. Residues 2155-2177 are disordered; it reads RKGSDKDKRKATRIKRVPSAHSA. A compositionally biased stretch (basic residues) spans 2163-2172; the sequence is RKATRIKRVP. The stretch at 2205–2231 forms a coiled coil; sequence LKQNEEAKEIQELFVKIEKEINTIAEL. Disordered regions lie at residues 2298-2459 and 2614-2637; these read IIGI…TADA and KSSL…EVTA. Positions 2309 to 2323 are enriched in low complexity; sequence RRPSSTPRGSTRSSN. Residues 2324–2341 show a composition bias toward polar residues; it reads LTTSQDSQATTKMTVSSE. Residues 2606-2630 are a coiled coil; that stretch reads LMQTLASEKSSLKAAEEDEKEGEEE. Residues 2621-2636 show a composition bias toward acidic residues; that stretch reads EEDEKEGEEEGEEEVT. Ig-like domains lie at 3095-3177 and 3179-3264; these read KEVM…SGLY and TERS…SFVS. The tract at residues 3362–3692 is disordered; sequence EVPKVAEPSE…NAEAQKVVDS (331 aa). Residues 3655 to 3665 are compositionally biased toward acidic residues; it reads SEEETPLEETN. Ig-like domains follow at residues 3789 to 3878, 3897 to 3985, and 4038 to 4125; these read PVFT…CEIV, PHFV…CTID, and PPYF…CVLT. Cystine bridges form between Cys3919–Cys3969 and Cys4059–Cys4109. Disordered stretches follow at residues 4553-4599, 4634-4699, 4750-4814, 4826-4855, 4912-4931, 4950-4969, 4989-5216, 5267-5294, 5306-5325, 5345-5372, 5428-6101, 6127-6157, 6214-6900, and 6930-8453; these read QSRE…SAPT, TVEP…EIVE, GSTA…TSEV, PVPE…EVQP, STAA…VESK, PETS…PVES, PETS…EILE, GSTA…EVEP, PETS…SVES, PETS…EVEP, GSTA…VEPT, VQVP…EVQP, STAA…ETSE, and APVE…DDKL. Residues 4555-4577 are compositionally biased toward basic and acidic residues; sequence RELDNTERNFTVNKEKDESKKPS. 56 PVET repeats span residues 4599–4626, 4627–4665, 4666–4704, 4755–4787, 4788–4826, 4827–4865, 4917–4948, 4949–4987, 4988–5026, 5027–5065, 5066–5104, 5105–5143, 5144–5182, 5183–5221, 5273–5304, 5305–5343, 5344–5382, 5434–5465, 5466–5504, 5505–5543, 5544–5582, 5583–5621, 5622–5660, 5661–5699, 5700–5738, 5739–5777, 5778–5816, 5817–5855, 5856–5894, 5895–5933, 5934–5972, 5973–6011, 6012–6050, 6051–6089, 6090–6128, 6129–6167, 6219–6250, 6251–6289, 6290–6328, 6329–6367, 6368–6406, 6407–6445, 6446–6484, 6485–6523, 6524–6562, 6563–6601, 6602–6640, 6641–6679, 6680–6718, 6719–6757, 6758–6796, 6797–6835, 6836–6874, 6875–6913, 6914–6952, and 6953–6991; these read TVEK…KDVP, VPET…KDVP, VPET…KDVT, PAQE…KDVP, AQEP…KDVP, VPET…KVVP, VPET…KDVS, VPET…KDVQ, AHEP…KDVP, VPET…KDLP, VPET…KDVA, VPEA…KDVP, and VPEA…KLKK. Basic and acidic residues-rich tracts occupy residues 4638–4651 and 4677–4691; these read TVEK…KETS and TVEK…EKSE. Residues 4960–4969 are compositionally biased toward basic and acidic residues; it reads TVEKLKPVES. Over residues 5038–5051 the composition is skewed to basic and acidic residues; sequence TVEKLKPVESKETS. 2 stretches are compositionally biased toward basic and acidic residues: residues 5116-5129 and 5155-5168; these read TVEK…KETS. A coiled-coil region spans residues 5212-5235; sequence AEILEQKDVTCEEEIKELLTEVEV. The segment covering 5316-5325 has biased composition (basic and acidic residues); that stretch reads TVEKLKSVES. Basic and acidic residues-rich tracts occupy residues 5477–5490 and 5516–5529; these read TVEK…KETS. Composition is skewed to basic and acidic residues over residues 6690-6704, 6729-6743, 6768-6782, 6807-6821, 6846-6860, and 6885-6899; these read PTKE…KETS. 4 stretches are compositionally biased toward basic and acidic residues: residues 6972 to 7606, 7613 to 7630, 7637 to 8062, and 8069 to 8453; these read ESKE…DNFK, LQKE…DNFK, and LQKE…DDKL. The stretch at 6984 to 7812 forms a coiled coil; it reads QADAKLKKEK…DKLKQETDAK (829 aa). BLUE repeat units follow at residues 6992 to 6996, 6997 to 7012, 7013 to 7028, 7029 to 7044, 7045 to 7060, 7061 to 7076, 7077 to 7092, 7093 to 7108, 7109 to 7124, 7125 to 7140, 7141 to 7156, 7157 to 7172, 7173 to 7188, 7189 to 7204, 7205 to 7220, 7221 to 7236, 7237 to 7252, 7253 to 7268, 7269 to 7284, 7285 to 7300, 7301 to 7316, 7317 to 7332, 7333 to 7348, 7349 to 7364, 7365 to 7380, 7381 to 7396, 7397 to 7412, 7413 to 7428, 7429 to 7444, 7445 to 7460, 7461 to 7476, 7477 to 7492, 7493 to 7508, 7509 to 7524, 7525 to 7540, 7541 to 7556, 7557 to 7572, 7573 to 7588, 7589 to 7604, 7605 to 7620, 7621 to 7628, 7629 to 7644, 7645 to 7652, 7653 to 7668, 7669 to 7684, 7685 to 7700, 7701 to 7716, 7717 to 7732, 7733 to 7748, 7749 to 7764, 7765 to 7772, 7773 to 7788, 7789 to 7804, 7805 to 7820, 7821 to 7836, 7837 to 7852, 7853 to 7868, 7869 to 7884, 7885 to 7900, 7901 to 7916, 7917 to 7932, 7933 to 7948, 7949 to 7964, 7965 to 7980, 7981 to 7996, 7997 to 8012, 8013 to 8028, 8029 to 8044, 8045 to 8060, 8061 to 8076, 8077 to 8084, 8085 to 8100, 8101 to 8116, 8117 to 8132, 8133 to 8148, 8149 to 8164, 8165 to 8180, 8181 to 8196, 8197 to 8212, 8213 to 8228, 8229 to 8244, 8245 to 8260, 8261 to 8276, 8277 to 8292, 8293 to 8308, 8309 to 8324, 8325 to 8340, 8341 to 8356, 8357 to 8371, 8373 to 8388, 8389 to 8404, 8405 to 8420, 8421 to 8436, 8437 to 8452, 8453 to 8468, and 8469 to 8484; these read EKDDK, HKQE…NDDK, LKQE…NDDK, LKQE…KHDK, LKQE…KDDK, LKQD…KDDK, LKHE…KDDK, LKQE…KDDR, LKKD…KDDK, LKHE…KDDN, FKQE…KDDK, LKQEKDDN, LKQEKDDK, LKQEKNDK, LKQE…KDNK, LKQE…KDDN, LKQE…EKDD, and LKQE…KGDK. Positions 7876-8273 form a coiled coil; sequence KLKKEKDNKL…EADAKLKKDK (398 aa). The stretch at 8316 to 8490 forms a coiled coil; that stretch reads KLKKEKDNKL…KGDKLKLEDQ (175 aa). Residues 8599 to 8611 show a composition bias toward basic residues; it reads KHLKKKKKHHKKE. The interval 8599-8626 is disordered; sequence KHLKKKKKHHKKEKIAVKETEQDEKTVS. The span at 8612–8626 shows a compositional bias: basic and acidic residues; sequence KIAVKETEQDEKTVS. Residues 8950–9041 enclose the Fibronectin type-III 1 domain; that stretch reads KPRKAQLVAL…EIIEVNTLDY (92 aa). Disordered stretches follow at residues 9079–9104, 9147–9436, 9481–9609, 9702–10224, 10239–10274, 10539–11018, 11030–11111, 11123–11213, 11225–11387, 11420–11592, 11624–11825, 11872–11955, 11996–12054, 12397–12418, 12537–12974, 13026–13045, 13065–13261, 13283–13514, 13553–13574, and 13594–13874; these read IEEH…LDSE, VQKI…AAAE, EEQS…ETES, ADAV…ESRI, ESDD…EDSP, QSAP…DSFT, EDAV…QKDQ, KKLA…QDKT, AKTT…SLTS, KGLN…NPEL, LTKK…SDNL, LSAH…TSLS, TNLI…LQKN, GRRV…RKKR, EESR…PAES, EAAK…TEVV, AAEA…LNDK, QAQA…EQLK, EEKQ…KLKL, and EKLA…RRTG. Residues 9084–9093 show a composition bias toward basic residues; it reads KLKKKSKKSK. Basic and acidic residues-rich tracts occupy residues 9172 to 9184 and 9191 to 9202; these read VKKD…KKSL and TKKEIQGKPEKK. Residues 9213–9231 are compositionally biased toward polar residues; that stretch reads SSISETSETLTKDLTQTKQ. Residues 9232-9267 show a composition bias toward basic and acidic residues; that stretch reads SEPEPAKRTTETSVQDEVKRKTETTSKSKQTTEEHP. Over residues 9273-9283 the composition is skewed to low complexity; sequence SDSSISSTSDA. Over residues 9295–9332 the composition is skewed to basic and acidic residues; it reads EAQKVTEKPETAKLESKSKMTEDTTKESDNKETVDEKP. Residues 9346–9359 show a composition bias toward low complexity; that stretch reads STISETSETSAVES. Positions 9371–9510 form a coiled coil; it reads AAVDKEKKQK…QTKAKAAEKQ (140 aa). Composition is skewed to basic and acidic residues over residues 9373–9436 and 9481–9521; these read VDKE…AAAE and EEQS…KSNK. Residues 9547–9558 show a composition bias toward low complexity; the sequence is SSISQKSDTSKT. The stretch at 9577-9749 forms a coiled coil; the sequence is TSKQKETDKK…QTVEEQAKLD (173 aa). 2 stretches are compositionally biased toward basic and acidic residues: residues 9578–9609 and 9702–9783; these read SKQK…ETES and ADAV…DEKP. Polar residues predominate over residues 9798 to 9809; the sequence is SISQKSVTSKTV. 3 stretches are compositionally biased toward basic and acidic residues: residues 9819–10004, 10040–10149, and 10162–10196; these read ETQK…DEKP, ETQK…KSEN, and VKSE…EPKE. Coiled-coil stretches lie at residues 9822 to 9995 and 10046 to 10129; these read KVAD…TEEA and EADK…TSKK. Positions 10197–10206 are enriched in basic residues; the sequence is KKKIIKKKKD. The span at 10207-10224 shows a compositional bias: basic and acidic residues; the sequence is TTKPQEASKELSSDESRI. The segment covering 10239 to 10250 has biased composition (polar residues); sequence ESDDLSTASTIK. The Fibronectin type-III 2 domain occupies 10461–10553; sequence KPTSLQVTST…DTIEATTQAE (93 aa). Residues 10566–10609 are compositionally biased toward basic and acidic residues; the sequence is EKVKEPVSKKPENTKESEGHKKRDRKESEDHDENNLGKSGKDEF. A compositionally biased stretch (polar residues) spans 10612–10637; that stretch reads SGESGTSNQNEESAQLNTSFTSTEQH. Over residues 10663–10680 the composition is skewed to acidic residues; that stretch reads IDADVVEVEYDEQGDDIP. Basic and acidic residues predominate over residues 10707 to 10716; it reads MAEKDSDAME. Residues 10779-10790 show a composition bias toward polar residues; sequence ADQTGMSIQDLN. Basic and acidic residues-rich tracts occupy residues 10840-10852 and 10863-10884; these read QLDK…DDKM and KKPE…KESD. Over residues 10961–10975 the composition is skewed to polar residues; the sequence is LSTSEQVENASQNLG. 3 stretches are compositionally biased toward basic and acidic residues: residues 10999 to 11009, 11045 to 11055, and 11076 to 11089; these read IHGEAESKLGE, SAEKTSLEVRD, and SNRD…RDLN. Residues 11018–11064 are a coiled coil; sequence TLQDLYEELKAKEDAVEAGAETSNADQSAEKTSLEVRDMKKKMKKKQ. The span at 11090–11108 shows a compositional bias: polar residues; sequence TQHSNQTGEDESSTFNFGQ. The span at 11159-11173 shows a compositional bias: basic and acidic residues; that stretch reads KKGEENEKTKFEAKH. Low complexity predominate over residues 11174–11187; that stretch reads LGSSSASDSLAEST. Composition is skewed to basic and acidic residues over residues 11195 to 11211, 11271 to 11280, and 11295 to 11318; these read KGEV…KNQD, IPDKNRDSDK, and ESAE…EKTL. The span at 11374-11387 shows a compositional bias: polar residues; it reads SKVTTSFADESLTS. Basic and acidic residues-rich tracts occupy residues 11440–11464 and 11472–11485; these read KVKD…KDQK and GSKD…EEKT. The span at 11503 to 11515 shows a compositional bias: polar residues; sequence MTDQKNVQESQYA. Basic and acidic residues-rich tracts occupy residues 11624–11635, 11645–11669, and 11722–11735; these read LTKKQDENDAKK, AKKD…DSRE, and VSEK…EKTV. Polar residues predominate over residues 11754–11767; sequence ESLNASSALSTTDV. Positions 11916–11937 are enriched in basic and acidic residues; the sequence is AEDKYVESRKKTTLKKKPEQKQ. Positions 12408–12428 form a coiled coil; that stretch reads ELDDAKKRKKRRIKRVVERRN. In terms of domain architecture, Ig-like 12 spans 12432–12547; the sequence is PRLTQLIPPR…ESRDDDKSVD (116 aa). Basic and acidic residues-rich tracts occupy residues 12537 to 12547, 12555 to 12567, and 12609 to 12689; these read EESRDDDKSVD, LEEK…DKSK, and VGAK…KKDA. The span at 12690-12701 shows a compositional bias: low complexity; it reads SQPSSSKESSPP. The segment covering 12729–12740 has biased composition (polar residues); that stretch reads TMHSETNITTTI. 3 stretches are compositionally biased toward basic and acidic residues: residues 12766-12839, 12852-12865, and 12889-12940; these read ESAK…KNKS, ETKK…EVPK, and PADD…DDKS. The stretch at 12797-12828 forms a coiled coil; the sequence is KKSEKKDEVTAEKQSTEALIESKKKEVDESKI. Residues 12980 to 13103 adopt a coiled-coil conformation; the sequence is AEVNKAKKQK…LKLEEESAAK (124 aa). Basic and acidic residues-rich tracts occupy residues 13065 to 13124, 13133 to 13145, 13176 to 13191, 13203 to 13261, 13283 to 13327, 13337 to 13354, and 13361 to 13416; these read AAEA…KAGE, PTSK…KDVG, TDSE…DEPT, EADK…LNDK, QAQA…EKQA, AVKK…EANK, and LKIE…DEKP. A coiled-coil region spans residues 13237–13380; that stretch reads LDAQEKIKKV…SKQTVEEQAK (144 aa). The span at 13431–13442 shows a compositional bias: polar residues; that stretch reads SISQKSETSKTV. The span at 13452 to 13514 shows a compositional bias: basic and acidic residues; the sequence is ETQKVADAAR…KQKEKDEQLK (63 aa). Residues 13455 to 13628 are a coiled coil; sequence KVADAARKQK…ETKSKQTEEA (174 aa). Positions 13594 to 13637 are enriched in basic and acidic residues; the sequence is EKLAQEQSRLEDEAKKSAEKQKLESETKSKQTEEAPKESVDEKP. Positions 13651 to 13662 are enriched in low complexity; that stretch reads SSISQKSKSAKS. Residues 13684–13696 are compositionally biased toward polar residues; that stretch reads KVEQSPDESTSAT. The segment covering 13697-13735 has biased composition (basic and acidic residues); that stretch reads IKRDPAQKTEEISKQDDGDEKKTTTDGKPPKPEDSEATP. Residues 13747-13760 show a composition bias toward low complexity; the sequence is SDSVASDASLADVS. Residues 13761 to 13770 show a composition bias toward basic and acidic residues; the sequence is KLSDDVEEKP. Positions 13784-13793 are enriched in polar residues; that stretch reads SVISETSSVD. 2 stretches are compositionally biased toward basic and acidic residues: residues 13795 to 13808 and 13824 to 13843; these read IKPE…EKAE and SEPK…DMMT. Residues 13963 to 14036 form the Ig-like 13 domain; that stretch reads PVDFVKYLPR…RAKYEDSGKY (74 aa). 3 Fibronectin type-III domains span residues 14153–14247, 14253–14348, and 14350–14448; these read APGD…TGSP, VEFP…TVEG, and VPEI…VLAD. 3 Ig-like domains span residues 14451 to 14542, 14550 to 14634, and 14638 to 14727; these read PRVL…VGIS, SSFS…VIVN, and PHIL…LVFE. Cysteines 14568 and 14618 form a disulfide. 2 consecutive Fibronectin type-III domains span residues 14826–14920 and 14937–15027; these read APCD…TLES and ILRT…LVPG. A disordered region spans residues 15011 to 15180; it reads VSSPSEETNP…TGKETTEKKK (170 aa). 2 stretches are compositionally biased toward basic and acidic residues: residues 15034 to 15060 and 15085 to 15117; these read KTEK…EKQV and KVAE…ESRR. Residues 15118–15132 show a composition bias toward polar residues; it reads GSLQASSDNESVTTT. Basic and acidic residues predominate over residues 15133-15177; sequence SEKRSEAELEKNSEKSAEKKSTSADLEAADKAETEKSETGKETTE. Ig-like domains follow at residues 15180–15274 and 15283–15371; these read KKVV…VSIA and PKVE…IALR. Fibronectin type-III domains follow at residues 15383-15475 and 15503-15596; these read PTGP…LKKK and QIGK…TTES. The disordered stretch occupies residues 15470–15503; that stretch reads TTLKKKEETGKQKSEKSESDEKKSESDKVSELKQ. Residues 15473-15503 show a composition bias toward basic and acidic residues; that stretch reads KKKEETGKQKSEKSESDEKKSESDKVSELKQ. Ig-like domains are found at residues 15599–15687 and 15692–15786; these read PAFT…CKLT and PEIN…IQVT. A Fibronectin type-III 10 domain is found at 15791-15883; sequence APGKPAVEDQ…DESELVVVKN (93 aa). The Protein kinase domain occupies 15934–16189; the sequence is YIIHEELGKG…VQDALRHPWI (256 aa). ATP contacts are provided by residues 15940–15948 and Lys15963; that span reads LGKGAYGTV. The active-site Proton acceptor is Asp16055. Positions 16206–16264 are autoinhibitory domain; sequence KMQPKLDKSGVPARQKRNFLSLKRWSDDLLPIGRLAKRGAIFRRLTMDGVFERNIAFDT. 4 Ig-like domains span residues 16268–16358, 16500–16575, 16605–16692, and 16705–16789; these read PSVK…AKLS, GKQL…VAKN, PRFR…FSVV, and PKFL…KDFT. Intrachain disulfides connect Cys16290–Cys16342, Cys16508–Cys16571, Cys16627–Cys16677, and Cys16726–Cys16778. A disordered region spans residues 16805–16827; the sequence is LTPVRSRSRSRSRSPSVVGGEIQ. Ig-like domains lie at 16829 to 16918, 16932 to 17025, and 17037 to 17126; these read PPVV…AIVV, PTFV…LTIS, and PYFI…TEVS. The interval 17121–17169 is disordered; it reads QNTEVSVTKSKEVKEKKEKKKVEKKDEGKKKPGRPGLPRPSGASKTEQV. Positions 17129–17150 are enriched in basic and acidic residues; the sequence is KSKEVKEKKEKKKVEKKDEGKK. A Fibronectin type-III 11 domain is found at 17154–17245; it reads RPGLPRPSGA…MTSTLKTASV (92 aa). Ig-like domains lie at 17249 to 17336, 17358 to 17447, 17457 to 17548, 17570 to 17661, 17676 to 17765, 17782 to 17873, 18008 to 18097, 18121 to 18213, 18224 to 18316, 18329 to 18417, and 18429 to 18519; these read PQFT…CQVT, PTLQ…CNVA, PSFS…VMIA, PRFT…TQVI, PKFT…QATT, PRFV…LNVS, PKFM…SEID, PNFI…LQVS, PPLF…MQLD, PRVF…LELT, and PKFN…MILS. 2 disulfide bridges follow: Cys17379–Cys17431 and Cys17478–Cys17530. Cys17697 and Cys17754 are oxidised to a cystine. Cys18143 and Cys18195 are disulfide-bonded.

Belongs to the protein kinase superfamily. CAMK Ser/Thr protein kinase family. In terms of assembly, interacts (via C-terminus) with myosin. Interacts with actin. It depends on Mg(2+) as a cofactor. Expression is restricted to body wall, enteric and vulval muscles.

It is found in the cytoplasm. The protein resides in the myofibril. Its subcellular location is the sarcomere. The protein localises to the a band. It localises to the i band. It is found in the nucleus membrane. The enzyme catalyses L-seryl-[protein] + ATP = O-phospho-L-seryl-[protein] + ADP + H(+). It carries out the reaction L-threonyl-[protein] + ATP = O-phospho-L-threonyl-[protein] + ADP + H(+). Functionally, serine/threonine-protein kinase. Key component in the assembly and functioning of muscles. By providing connections at the level of individual microfilaments, it contributes to the fine balance of forces between the two halves of the sarcomere. The size and extensibility of the cross-links are the main determinants of sarcomere extensibility properties of muscle. In non-muscle cells, seems to play a role in chromosome condensation and chromosome segregation during mitosis. Might link the lamina network to chromatin or nuclear actin, or both during interphase. In Caenorhabditis elegans, this protein is Titin homolog.